Here is a 314-residue protein sequence, read N- to C-terminus: Phospho-N-acetylmuramoyl-pentapeptide-transferase (314 aa).

10 consecutive transmembrane segments (helical) span residues 4–24, 52–72, 77–97, 111–131, 146–166, 169–189, 191–211, 219–239, 242–262, and 294–314; these read LIFY…PIFI, TMGG…TYFI, LFLI…LDDY, IQKL…ISIF, LDLK…MSNA, LTDG…LFTA, IAGI…AYLF, IFMG…LALY, VELF…SVII, and IVLI…GGVL.

The protein belongs to the glycosyltransferase 4 family. MraY subfamily. Mg(2+) serves as cofactor.

It localises to the cell inner membrane. It catalyses the reaction UDP-N-acetyl-alpha-D-muramoyl-L-alanyl-gamma-D-glutamyl-meso-2,6-diaminopimeloyl-D-alanyl-D-alanine + di-trans,octa-cis-undecaprenyl phosphate = di-trans,octa-cis-undecaprenyl diphospho-N-acetyl-alpha-D-muramoyl-L-alanyl-D-glutamyl-meso-2,6-diaminopimeloyl-D-alanyl-D-alanine + UMP. Its pathway is cell wall biogenesis; peptidoglycan biosynthesis. In terms of biological role, catalyzes the initial step of the lipid cycle reactions in the biosynthesis of the cell wall peptidoglycan: transfers peptidoglycan precursor phospho-MurNAc-pentapeptide from UDP-MurNAc-pentapeptide onto the lipid carrier undecaprenyl phosphate, yielding undecaprenyl-pyrophosphoryl-MurNAc-pentapeptide, known as lipid I. The protein is Phospho-N-acetylmuramoyl-pentapeptide-transferase of Petrotoga mobilis (strain DSM 10674 / SJ95).